Consider the following 246-residue polypeptide: MLLIPAIDLKDGHCVRLIQGDMDQSTTFGEDPAIIARRWLDAGARRLHLVDLNGAFAGQPKNLVAIKAILKEVDGRIPVQLGGGIRDLDTIEKYIDAGISYVIIGTAAVKNPGFLQDACSAFGGHVIVGLDAKDGKVAIDGWSKLTGQDVHSVAKRFEDWGVESIIYTDIGRDGMLTGINIDATVNLAQSLKIPVIASGGLAGMADIEALCKVEDEGIEGVICGRAIYSGDLDFAAAQARADELRA.

The active-site Proton acceptor is the D8. D131 functions as the Proton donor in the catalytic mechanism.

This sequence belongs to the HisA/HisF family.

It localises to the cytoplasm. The enzyme catalyses 1-(5-phospho-beta-D-ribosyl)-5-[(5-phospho-beta-D-ribosylamino)methylideneamino]imidazole-4-carboxamide = 5-[(5-phospho-1-deoxy-D-ribulos-1-ylimino)methylamino]-1-(5-phospho-beta-D-ribosyl)imidazole-4-carboxamide. It participates in amino-acid biosynthesis; L-histidine biosynthesis; L-histidine from 5-phospho-alpha-D-ribose 1-diphosphate: step 4/9. This Delftia acidovorans (strain DSM 14801 / SPH-1) protein is 1-(5-phosphoribosyl)-5-[(5-phosphoribosylamino)methylideneamino] imidazole-4-carboxamide isomerase.